We begin with the raw amino-acid sequence, 203 residues long: Superoxide dismutase [Mn] (203 aa).

Residues His27, His81, Asp164, and His168 each coordinate Mn(2+).

It belongs to the iron/manganese superoxide dismutase family. Homodimer. The cofactor is Mn(2+).

The catalysed reaction is 2 superoxide + 2 H(+) = H2O2 + O2. Functionally, destroys superoxide anion radicals which are normally produced within the cells and which are toxic to biological systems. In Pseudomonas putida (Arthrobacter siderocapsulatus), this protein is Superoxide dismutase [Mn] (sodA).